A 237-amino-acid chain; its full sequence is Flagellar L-ring protein (237 aa).

The first 16 residues, 1–16 (MIKRSAVVLMAVILTG), serve as a signal peptide directing secretion. C17 carries N-palmitoyl cysteine lipidation. C17 is lipidated: S-diacylglycerol cysteine. The interval 122 to 143 (PPDSSGDMSTDSNSSSDGKGSV) is disordered. The span at 124-140 (DSSGDMSTDSNSSSDGK) shows a compositional bias: low complexity.

Belongs to the FlgH family. As to quaternary structure, the basal body constitutes a major portion of the flagellar organelle and consists of four rings (L,P,S, and M) mounted on a central rod.

It is found in the cell outer membrane. It localises to the bacterial flagellum basal body. Functionally, assembles around the rod to form the L-ring and probably protects the motor/basal body from shearing forces during rotation. The polypeptide is Flagellar L-ring protein (Allorhizobium ampelinum (strain ATCC BAA-846 / DSM 112012 / S4) (Agrobacterium vitis (strain S4))).